The sequence spans 136 residues: Translation initiation factor 5A (136 aa).

A Hypusine modification is found at lysine 38.

This sequence belongs to the eIF-5A family.

The protein localises to the cytoplasm. Functionally, functions by promoting the formation of the first peptide bond. This is Translation initiation factor 5A from Methanopyrus kandleri (strain AV19 / DSM 6324 / JCM 9639 / NBRC 100938).